Consider the following 206-residue polypeptide: Max dimerization protein 3 (206 aa).

Positions 8–25 are interaction with SIN3A and SIN3B; that stretch reads IQVLLQAAEFLERREREA. Disordered regions lie at residues 29-66 and 122-171; these read YASL…NELE and KLRS…QEDL. The bHLH domain maps to 57–109; it reads SGRSVHNELEKRRRAQLKRCLEQLRQQMPLGVDCTRYTTLSLLRRARVHIQKL. Positions 126–138 are enriched in low complexity; it reads KQQSLQQQLEQLQ. Over residues 143–153 the composition is skewed to basic and acidic residues; it reads ARERERLRADS.

Efficient DNA binding requires dimerization with another bHLH protein. Binds DNA as a heterodimer with MAX. Interacts with SIN3A AND SIN3B. Interacts with RNF17. As to expression, expressed only in the proliferating areas of the testis and thymus.

The protein localises to the nucleus. Functionally, transcriptional repressor. Binds with MAX to form a sequence-specific DNA-binding protein complex which recognizes the core sequence 5'-CAC[GA]TG-3'. Antagonizes MYC transcriptional activity by competing for MAX and suppresses MYC dependent cell transformation. The chain is Max dimerization protein 3 (Mxd3) from Mus musculus (Mouse).